Here is a 203-residue protein sequence, read N- to C-terminus: Urease accessory protein UreG (203 aa).

Residue 14 to 21 (GPVGSGKT) coordinates GTP.

Belongs to the SIMIBI class G3E GTPase family. UreG subfamily. In terms of assembly, homodimer. UreD, UreF and UreG form a complex that acts as a GTP-hydrolysis-dependent molecular chaperone, activating the urease apoprotein by helping to assemble the nickel containing metallocenter of UreC. The UreE protein probably delivers the nickel.

It is found in the cytoplasm. Facilitates the functional incorporation of the urease nickel metallocenter. This process requires GTP hydrolysis, probably effectuated by UreG. The chain is Urease accessory protein UreG from Sinorhizobium medicae (strain WSM419) (Ensifer medicae).